The sequence spans 307 residues: Phosphonates import ATP-binding protein PhnC (307 aa).

The ABC transporter domain maps to Ile4–Ala252. Gly37 to Ser44 contributes to the ATP binding site. The segment covering Ala265 to Arg275 has biased composition (basic and acidic residues). A disordered region spans residues Ala265 to Arg307.

This sequence belongs to the ABC transporter superfamily. Phosphonates importer (TC 3.A.1.9.1) family. The complex is composed of two ATP-binding proteins (PhnC), two transmembrane proteins (PhnE) and a solute-binding protein (PhnD).

It localises to the cell inner membrane. It carries out the reaction phosphonate(out) + ATP + H2O = phosphonate(in) + ADP + phosphate + H(+). Its function is as follows. Part of the ABC transporter complex PhnCDE involved in phosphonates import. Responsible for energy coupling to the transport system. The protein is Phosphonates import ATP-binding protein PhnC of Burkholderia pseudomallei (strain 1710b).